The sequence spans 122 residues: Large ribosomal subunit protein uL14 (122 aa).

This sequence belongs to the universal ribosomal protein uL14 family. Part of the 50S ribosomal subunit. Forms a cluster with proteins L3 and L19. In the 70S ribosome, L14 and L19 interact and together make contacts with the 16S rRNA in bridges B5 and B8.

In terms of biological role, binds to 23S rRNA. Forms part of two intersubunit bridges in the 70S ribosome. This is Large ribosomal subunit protein uL14 from Bdellovibrio bacteriovorus (strain ATCC 15356 / DSM 50701 / NCIMB 9529 / HD100).